The following is a 132-amino-acid chain: Small ribosomal subunit protein uS8 (132 aa).

The protein belongs to the universal ribosomal protein uS8 family. Part of the 30S ribosomal subunit. Contacts proteins S5 and S12.

In terms of biological role, one of the primary rRNA binding proteins, it binds directly to 16S rRNA central domain where it helps coordinate assembly of the platform of the 30S subunit. The chain is Small ribosomal subunit protein uS8 from Acidobacterium capsulatum (strain ATCC 51196 / DSM 11244 / BCRC 80197 / JCM 7670 / NBRC 15755 / NCIMB 13165 / 161).